The primary structure comprises 345 residues: Heat-inducible transcription repressor HrcA (345 aa).

It belongs to the HrcA family.

In terms of biological role, negative regulator of class I heat shock genes (grpE-dnaK-dnaJ and groELS operons). Prevents heat-shock induction of these operons. In Listeria monocytogenes serotype 1/2a (strain 10403S), this protein is Heat-inducible transcription repressor HrcA.